We begin with the raw amino-acid sequence, 245 residues long: 5-oxoprolinase subunit A (245 aa).

The protein belongs to the LamB/PxpA family. Forms a complex composed of PxpA, PxpB and PxpC.

The catalysed reaction is 5-oxo-L-proline + ATP + 2 H2O = L-glutamate + ADP + phosphate + H(+). Its function is as follows. Catalyzes the cleavage of 5-oxoproline to form L-glutamate coupled to the hydrolysis of ATP to ADP and inorganic phosphate. In Cronobacter sakazakii (strain ATCC BAA-894) (Enterobacter sakazakii), this protein is 5-oxoprolinase subunit A.